The following is a 159-amino-acid chain: SsrA-binding protein (159 aa).

Residues D137–G159 are disordered.

It belongs to the SmpB family.

The protein localises to the cytoplasm. Required for rescue of stalled ribosomes mediated by trans-translation. Binds to transfer-messenger RNA (tmRNA), required for stable association of tmRNA with ribosomes. tmRNA and SmpB together mimic tRNA shape, replacing the anticodon stem-loop with SmpB. tmRNA is encoded by the ssrA gene; the 2 termini fold to resemble tRNA(Ala) and it encodes a 'tag peptide', a short internal open reading frame. During trans-translation Ala-aminoacylated tmRNA acts like a tRNA, entering the A-site of stalled ribosomes, displacing the stalled mRNA. The ribosome then switches to translate the ORF on the tmRNA; the nascent peptide is terminated with the 'tag peptide' encoded by the tmRNA and targeted for degradation. The ribosome is freed to recommence translation, which seems to be the essential function of trans-translation. The chain is SsrA-binding protein from Mesorhizobium japonicum (strain LMG 29417 / CECT 9101 / MAFF 303099) (Mesorhizobium loti (strain MAFF 303099)).